The following is a 354-amino-acid chain: Ornithine transcarbamylase, mitochondrial (354 aa).

Residues 1 to 32 constitute a mitochondrion transit peptide; that stretch reads MLFNLRILLNNAAFRNGHNFMVRNFRCGQPLQ. Lys-70 is subject to N6-acetyllysine; alternate. Lys-70 is modified (N6-succinyllysine; alternate). Lys-80 carries the post-translational modification N6-succinyllysine. Residue Lys-88 is modified to N6-acetyllysine; alternate. Residue Lys-88 is modified to N6-succinyllysine; alternate. 90–93 lines the carbamoyl phosphate pocket; that stretch reads STRT. A Phosphoserine modification is found at Ser-133. A carbamoyl phosphate-binding site is contributed by Arg-141. Position 144 is an N6-acetyllysine; alternate (Lys-144). The residue at position 144 (Lys-144) is an N6-succinyllysine; alternate. His-168 and Gln-171 together coordinate carbamoyl phosphate. Asn-199 lines the L-ornithine pocket. An N6-acetyllysine; alternate mark is found at Lys-221, Lys-231, and Lys-238. Residues Lys-221, Lys-231, and Lys-238 each carry the N6-succinyllysine; alternate modification. An N6-acetyllysine modification is found at Lys-243. L-ornithine-binding residues include Asp-263, Ser-267, and Met-268. N6-succinyllysine is present on residues Lys-274 and Lys-289. Lys-292 is subject to N6-acetyllysine; alternate. At Lys-292 the chain carries N6-succinyllysine; alternate. Cys-303 acts as the Proton acceptor in catalysis. 303–304 contributes to the carbamoyl phosphate binding site; it reads CL. The residue at position 307 (Lys-307) is an N6-acetyllysine; alternate. Residue Lys-307 is modified to N6-succinyllysine; alternate. Residue Arg-330 participates in carbamoyl phosphate binding.

The protein belongs to the aspartate/ornithine carbamoyltransferase superfamily. OTCase family. Homotrimer. In terms of processing, acetylation at Lys-88 negatively regulates ornithine carbamoyltransferase activity in response to nutrient signals. In terms of tissue distribution, mainly expressed in liver and intestinal mucosa.

It is found in the mitochondrion matrix. The enzyme catalyses carbamoyl phosphate + L-ornithine = L-citrulline + phosphate + H(+). It participates in nitrogen metabolism; urea cycle; L-citrulline from L-ornithine and carbamoyl phosphate: step 1/1. Negatively regulated by lysine acetylation. Functionally, catalyzes the second step of the urea cycle, the condensation of carbamoyl phosphate with L-ornithine to form L-citrulline. The urea cycle ensures the detoxification of ammonia by converting it to urea for excretion. The sequence is that of Ornithine transcarbamylase, mitochondrial from Homo sapiens (Human).